The sequence spans 228 residues: Aspartyl protease inhibitor (228 aa).

The signal sequence occupies residues 1–15 (MKLIELCVLCAIAFA). Residues 88-112 (KLKSRMSGKKEEKAAVTSTKDEDLP) show a composition bias toward basic and acidic residues. Positions 88–119 (KLKSRMSGKKEEKAAVTSTKDEDLPKPPQKPS) are disordered. Cys-134 and Cys-224 are oxidised to a cystine.

The protein belongs to the protease inhibitor I33 family.

It is found in the secreted. Aspartyl protease inhibitor. The polypeptide is Aspartyl protease inhibitor (Trichostrongylus colubriformis (Black scour worm)).